Consider the following 105-residue polypeptide: DNA-directed RNA polymerase subunit omega (105 aa).

The protein belongs to the RNA polymerase subunit omega family. As to quaternary structure, the RNAP catalytic core consists of 2 alpha, 1 beta, 1 beta' and 1 omega subunit. When a sigma factor is associated with the core the holoenzyme is formed, which can initiate transcription.

It carries out the reaction RNA(n) + a ribonucleoside 5'-triphosphate = RNA(n+1) + diphosphate. Promotes RNA polymerase assembly. Latches the N- and C-terminal regions of the beta' subunit thereby facilitating its interaction with the beta and alpha subunits. The polypeptide is DNA-directed RNA polymerase subunit omega (Streptococcus equi subsp. zooepidemicus (strain MGCS10565)).